The chain runs to 35 residues: Endochitinase 2 (35 aa).

This sequence belongs to the glycosyl hydrolase 19 family. Chitinase class I subfamily.

The enzyme catalyses Random endo-hydrolysis of N-acetyl-beta-D-glucosaminide (1-&gt;4)-beta-linkages in chitin and chitodextrins.. Functionally, defense against chitin-containing fungal pathogens. The sequence is that of Endochitinase 2 from Capsicum chinense (Scotch bonnet).